Consider the following 307-residue polypeptide: Taste receptor type 2 member 10 (307 aa).

The Extracellular segment spans residues 1–6 (MLSVVE). Residues 7–27 (GILILVVISESVFGVLGNGFI) form a helical membrane-spanning segment. Topologically, residues 28 to 42 (GLVNCIDCAKNKLST) are cytoplasmic. The chain crosses the membrane as a helical span at residues 43 to 63 (IGFILTGLAISRIFLIWIIIT). Residues 64-100 (DGFIQIFSPDVYASGNLIEYISYFWVITNQSSIWFAT) lie on the Extracellular side of the membrane. Asn-92 is a glycosylation site (N-linked (GlcNAc...) asparagine). The helical transmembrane segment at 101–121 (SLSIFYFLKIANFSNYIFLWL) threads the bilayer. The Cytoplasmic segment spans residues 122–126 (KSRIN). Residues 127–147 (RVLPLLMGFLLISCLLNFAYI) form a helical membrane-spanning segment. Topologically, residues 148-179 (VKILNDLKMKNDTVWRLNMYKSEYFIKQLLLN) are extracellular. Asn-158 carries an N-linked (GlcNAc...) asparagine glycan. Residues 180–200 (LGVIFFFTLSLITSVLLIISL) traverse the membrane as a helical segment. Residues 201 to 227 (WRHNRQMQSNVTGLRDSITEAHVKAMK) lie on the Cytoplasmic side of the membrane. The helical transmembrane segment at 228 to 248 (VLISFIILFILYFIGIAIEIS) threads the bilayer. At 249 to 257 (YFTVPENKL) the chain is on the extracellular side. The helical transmembrane segment at 258–278 (LLIFGMTTTAIYPWGHSFILI) threads the bilayer. Topologically, residues 279–307 (LGNSKLKQASLRVLQQLKCCEERKNLRAT) are cytoplasmic.

Belongs to the G-protein coupled receptor T2R family.

The protein localises to the membrane. Functionally, receptor that may play a role in the perception of bitterness and is gustducin-linked. May play a role in sensing the chemical composition of the gastrointestinal content. The activity of this receptor may stimulate alpha gustducin, mediate PLC-beta-2 activation and lead to the gating of TRPM5. The protein is Taste receptor type 2 member 10 (TAS2R10) of Papio hamadryas (Hamadryas baboon).